The sequence spans 70 residues: ATP synthase subunit c (70 aa).

The next 2 helical transmembrane spans lie at 4 to 24 (IAAGIAMFGAAIGGGIGDGIV) and 47 to 67 (FIGVGLVEAMPILAFVISLLV).

This sequence belongs to the ATPase C chain family. F-type ATPases have 2 components, F(1) - the catalytic core - and F(0) - the membrane proton channel. F(1) has five subunits: alpha(3), beta(3), gamma(1), delta(1), epsilon(1). F(0) has three main subunits: a(1), b(2) and c(10-14). The alpha and beta chains form an alternating ring which encloses part of the gamma chain. F(1) is attached to F(0) by a central stalk formed by the gamma and epsilon chains, while a peripheral stalk is formed by the delta and b chains.

The protein resides in the cell membrane. F(1)F(0) ATP synthase produces ATP from ADP in the presence of a proton or sodium gradient. F-type ATPases consist of two structural domains, F(1) containing the extramembraneous catalytic core and F(0) containing the membrane proton channel, linked together by a central stalk and a peripheral stalk. During catalysis, ATP synthesis in the catalytic domain of F(1) is coupled via a rotary mechanism of the central stalk subunits to proton translocation. In terms of biological role, key component of the F(0) channel; it plays a direct role in translocation across the membrane. A homomeric c-ring of between 10-14 subunits forms the central stalk rotor element with the F(1) delta and epsilon subunits. This Pediococcus pentosaceus (strain ATCC 25745 / CCUG 21536 / LMG 10740 / 183-1w) protein is ATP synthase subunit c.